The sequence spans 89 residues: Small ribosomal subunit protein bS20 (89 aa).

A compositionally biased stretch (basic residues) spans 1–12; it reads MANIKSAKKRAK. Residues 1 to 22 form a disordered region; sequence MANIKSAKKRAKQTIVRNERNT.

This sequence belongs to the bacterial ribosomal protein bS20 family.

Its function is as follows. Binds directly to 16S ribosomal RNA. The sequence is that of Small ribosomal subunit protein bS20 from Xanthomonas oryzae pv. oryzae (strain KACC10331 / KXO85).